The primary structure comprises 510 residues: NAD(P)H-quinone oxidoreductase subunit 2 B, chloroplastic (510 aa).

13 helical membrane passes run 24-44, 57-77, 99-119, 124-144, 149-169, 183-203, 227-247, 295-315, 323-343, 354-374, 392-412, 418-438, and 482-502; these read LLLF…GLIL, IPWL…ALLF, IFQF…VEYI, MAIT…MFLC, LITI…LSGY, YLLM…WLYG, PGIS…LSPA, WHLL…LIAI, MLAY…IVGD, YMLF…SFGL, AFLA…PPLA, LHLF…IGLL, and LSMI…NPII.

The protein belongs to the complex I subunit 2 family. NDH is composed of at least 16 different subunits, 5 of which are encoded in the nucleus.

The protein resides in the plastid. The protein localises to the chloroplast thylakoid membrane. It catalyses the reaction a plastoquinone + NADH + (n+1) H(+)(in) = a plastoquinol + NAD(+) + n H(+)(out). It carries out the reaction a plastoquinone + NADPH + (n+1) H(+)(in) = a plastoquinol + NADP(+) + n H(+)(out). Its function is as follows. NDH shuttles electrons from NAD(P)H:plastoquinone, via FMN and iron-sulfur (Fe-S) centers, to quinones in the photosynthetic chain and possibly in a chloroplast respiratory chain. The immediate electron acceptor for the enzyme in this species is believed to be plastoquinone. Couples the redox reaction to proton translocation, and thus conserves the redox energy in a proton gradient. The polypeptide is NAD(P)H-quinone oxidoreductase subunit 2 B, chloroplastic (Morus indica (Mulberry)).